The primary structure comprises 864 residues: Translation initiation factor IF-2 (864 aa).

The tract at residues 1 to 252 (MEDKNKTIKE…KTSSDKRDFS (252 aa)) is disordered. Residues 78-90 (KEVKYEESSRKQD) show a composition bias toward basic and acidic residues. Over residues 106–120 (VRPSGDSSYPVSRSP) the composition is skewed to polar residues. A compositionally biased stretch (gly residues) spans 150–212 (RGPGQGGGYQ…PGNRSGGPGG (63 aa)). The span at 239 to 252 (HDKEKTSSDKRDFS) shows a compositional bias: basic and acidic residues. In terms of domain architecture, tr-type G spans 359–528 (NRPPVVTIMG…LLQAEVMDLK (170 aa)). Positions 368–375 (GHVDHGKT) are G1. A GTP-binding site is contributed by 368-375 (GHVDHGKT). Residues 393-397 (GITQH) form a G2 region. The segment at 414–417 (DTPG) is G3. Residues 414 to 418 (DTPGH) and 468 to 471 (NKID) each bind GTP. The interval 468–471 (NKID) is G4. The tract at residues 504–506 (SAR) is G5.

It belongs to the TRAFAC class translation factor GTPase superfamily. Classic translation factor GTPase family. IF-2 subfamily.

Its subcellular location is the cytoplasm. Its function is as follows. One of the essential components for the initiation of protein synthesis. Protects formylmethionyl-tRNA from spontaneous hydrolysis and promotes its binding to the 30S ribosomal subunits. Also involved in the hydrolysis of GTP during the formation of the 70S ribosomal complex. This Leptospira borgpetersenii serovar Hardjo-bovis (strain L550) protein is Translation initiation factor IF-2.